A 208-amino-acid chain; its full sequence is Putative 3-methyladenine DNA glycosylase (208 aa).

The interval 1-20 is disordered; the sequence is MGRAHTVSRGEDHPPIARSE.

It belongs to the DNA glycosylase MPG family.

The chain is Putative 3-methyladenine DNA glycosylase from Mesorhizobium japonicum (strain LMG 29417 / CECT 9101 / MAFF 303099) (Mesorhizobium loti (strain MAFF 303099)).